A 171-amino-acid polypeptide reads, in one-letter code: T-cell surface glycoprotein CD3 delta chain (171 aa).

Residues M1 to P21 form the signal peptide. Residues F22–A105 lie on the Extracellular side of the membrane. A disulfide bridge connects residues C37 and C73. N-linked (GlcNAc...) asparagine glycosylation is found at N38 and N74. Residues G106–A126 form a helical membrane-spanning segment. Residues G127–K171 are Cytoplasmic-facing. An ITAM domain is found at D138–N166. Y149 and Y160 each carry phosphotyrosine.

In terms of assembly, the TCR-CD3 complex is composed of a CD3D/CD3E and a CD3G/CD3E heterodimers that preferentially associate with TCRalpha and TCRbeta, respectively, to form TCRalpha/CD3E/CD3G and TCRbeta/CD3G/CD3E trimers. In turn, the hexamer interacts with CD3Z homodimer to form the TCR-CD3 complex. Alternatively, TCRalpha and TCRbeta can be replaced by TCRgamma and TCRdelta. Interacts with coreceptors CD4 and CD8. Post-translationally, phosphorylated on Tyr residues after T-cell receptor triggering by LCK in association with CD4/CD8. In terms of tissue distribution, CD3D is mostly present on T-lymphocytes with its TCR-CD3 partners. Present also in fetal NK-cells.

It is found in the cell membrane. Its function is as follows. Part of the TCR-CD3 complex present on T-lymphocyte cell surface that plays an essential role in adaptive immune response. When antigen presenting cells (APCs) activate T-cell receptor (TCR), TCR-mediated signals are transmitted across the cell membrane by the CD3 chains CD3D, CD3E, CD3G and CD3Z. All CD3 chains contain immunoreceptor tyrosine-based activation motifs (ITAMs) in their cytoplasmic domain. Upon TCR engagement, these motifs become phosphorylated by Src family protein tyrosine kinases LCK and FYN, resulting in the activation of downstream signaling pathways. In addition of this role of signal transduction in T-cell activation, CD3D plays an essential role in thymocyte differentiation. Indeed, participates in correct intracellular TCR-CD3 complex assembly and surface expression. In absence of a functional TCR-CD3 complex, thymocytes are unable to differentiate properly. Interacts with CD4 and CD8 and thus serves to establish a functional link between the TCR and coreceptors CD4 and CD8, which is needed for activation and positive selection of CD4 or CD8 T-cells. This chain is T-cell surface glycoprotein CD3 delta chain (CD3D), found in Homo sapiens (Human).